The primary structure comprises 190 residues: Glutathione peroxidase 2 (190 aa).

The active site involves U40. A non-standard amino acid (selenocysteine) is located at residue U40.

Belongs to the glutathione peroxidase family. In terms of assembly, homotetramer.

The protein resides in the cytoplasm. It localises to the cytosol. It catalyses the reaction 2 glutathione + H2O2 = glutathione disulfide + 2 H2O. It carries out the reaction a hydroperoxy polyunsaturated fatty acid + 2 glutathione = a hydroxy polyunsaturated fatty acid + glutathione disulfide + H2O. The catalysed reaction is tert-butyl hydroperoxide + 2 glutathione = tert-butanol + glutathione disulfide + H2O. The enzyme catalyses cumene hydroperoxide + 2 glutathione = 2-phenylpropan-2-ol + glutathione disulfide + H2O. It catalyses the reaction (13S)-hydroperoxy-(9Z,11E)-octadecadienoate + 2 glutathione = (13S)-hydroxy-(9Z,11E)-octadecadienoate + glutathione disulfide + H2O. It carries out the reaction (5S)-hydroperoxy-(6E,8Z,11Z,14Z)-eicosatetraenoate + 2 glutathione = (5S)-hydroxy-(6E,8Z,11Z,14Z)-eicosatetraenoate + glutathione disulfide + H2O. The catalysed reaction is (12R)-hydroperoxy-(5Z,8Z,10E,14Z)-eicosatetraenoate + 2 glutathione = (12R)-hydroxy-(5Z,8Z,10E,14Z)-eicosatetraenoate + glutathione disulfide + H2O. The enzyme catalyses (15S)-hydroperoxy-(5Z,8Z,11Z,13E)-eicosatetraenoate + 2 glutathione = (15S)-hydroxy-(5Z,8Z,11Z,13E)-eicosatetraenoate + glutathione disulfide + H2O. Catalyzes the reduction of hydroperoxides in a glutathione-dependent manner thus regulating cellular redox homeostasis. Can reduce small soluble hydroperoxides such as H2O2, cumene hydroperoxide and tert-butyl hydroperoxide, as well as several fatty acid-derived hydroperoxides. Cannot reduce phosphatidycholine hydroperoxide. The protein is Glutathione peroxidase 2 (GPX2) of Callithrix jacchus (White-tufted-ear marmoset).